The sequence spans 189 residues: GTP cyclohydrolase 1 (189 aa).

Residues C80, H83, and C152 each coordinate Zn(2+).

Belongs to the GTP cyclohydrolase I family. As to quaternary structure, toroid-shaped homodecamer, composed of two pentamers of five dimers.

The catalysed reaction is GTP + H2O = 7,8-dihydroneopterin 3'-triphosphate + formate + H(+). It functions in the pathway cofactor biosynthesis; 7,8-dihydroneopterin triphosphate biosynthesis; 7,8-dihydroneopterin triphosphate from GTP: step 1/1. The chain is GTP cyclohydrolase 1 from Latilactobacillus sakei subsp. sakei (strain 23K) (Lactobacillus sakei subsp. sakei).